Here is a 228-residue protein sequence, read N- to C-terminus: Cytidylate kinase (228 aa).

Residue 17–25 (GPSASGKGT) coordinates ATP.

The protein belongs to the cytidylate kinase family. Type 1 subfamily.

The protein localises to the cytoplasm. It catalyses the reaction CMP + ATP = CDP + ADP. The catalysed reaction is dCMP + ATP = dCDP + ADP. This Paraburkholderia xenovorans (strain LB400) protein is Cytidylate kinase.